The following is a 153-amino-acid chain: Cytochrome c-554 (153 aa).

Residues 1-20 (MRPIPALALTFSLVAMPALA) form the signal peptide. The residue at position 21 (Q21) is a Pyrrolidone carboxylic acid. Residues M37, C142, C145, and H146 each contribute to the heme c site.

In terms of processing, binds 1 heme c group covalently per subunit.

It is found in the periplasm. In terms of biological role, monoheme c-type cytochrome, that is particularly expressed when cells generate energy via aerobic respiration. This chain is Cytochrome c-554 (cycF), found in Cereibacter sphaeroides (strain ATCC 17023 / DSM 158 / JCM 6121 / CCUG 31486 / LMG 2827 / NBRC 12203 / NCIMB 8253 / ATH 2.4.1.) (Rhodobacter sphaeroides).